Reading from the N-terminus, the 281-residue chain is Very long chain fatty acid elongase 7 (281 aa).

Alanine 2 carries the post-translational modification N-acetylalanine. Residues 2–27 (AFSDLTSRTVHLYDNWIKDADPRVED) are Lumenal-facing. A helical membrane pass occupies residues 28–48 (WLLMSSPLPQTILLGFYVYFV). Over 49–72 (TSLGPKLMENRKPFELKKAMITYN) the chain is Cytoplasmic. A helical transmembrane segment spans residues 73–93 (FFIVLFSVYMCYEFVMSGWGI). Residues 94 to 115 (GYSFRCDIVDYSRSPTALRMAR) are Lumenal-facing. Cysteines 99 and 231 form a disulfide. Residues 116 to 136 (TCWLYYFSKFIELLDTIFFVL) traverse the membrane as a helical segment. The 3-oxoeicosanoyl-CoA site is built by lysine 124, arginine 137, lysine 139, glutamine 142, and histidine 147. The Cytoplasmic portion of the chain corresponds to 137-142 (RKKNSQ). A helical membrane pass occupies residues 143–162 (VTFLHVFHHTIMPWTWWFGV). The short motif at 147–151 (HVFHH) is the HxxHH motif element. The active-site Nucleophile is histidine 150. The Lumenal segment spans residues 163–171 (KFAAGGLGT). The chain crosses the membrane as a helical span at residues 172 to 194 (FHALLNTAVHVVMYSYYGLSALG). 3-oxoeicosanoyl-CoA is bound by residues tyrosine 187, lysine 204, threonine 208, and glutamine 211. The Cytoplasmic portion of the chain corresponds to 195-206 (PAYQKYLWWKKY). Residues 207–227 (LTSLQLVQFVIVAIHISQFFF) traverse the membrane as a helical segment. Topologically, residues 228–236 (MEDCKYQFP) are lumenal. Residues 237 to 257 (VFACIIMSYSFMFLLLFLHFW) traverse the membrane as a helical segment. Over 258-281 (YRAYTKGQRLPKTVKNGTCKNKDN) the chain is Cytoplasmic. 3-oxoeicosanoyl-CoA is bound at residue arginine 266. The Di-lysine motif motif lies at 277–281 (KNKDN).

This sequence belongs to the ELO family. ELOVL7 subfamily. Homodimer. Interacts with TECR. As to expression, expressed in most tissues except heart and skeletal muscle.

It localises to the endoplasmic reticulum membrane. It carries out the reaction a very-long-chain acyl-CoA + malonyl-CoA + H(+) = a very-long-chain 3-oxoacyl-CoA + CO2 + CoA. The catalysed reaction is eicosanoyl-CoA + malonyl-CoA + H(+) = 3-oxodocosanoyl-CoA + CO2 + CoA. The enzyme catalyses (5Z,8Z,11Z,14Z)-eicosatetraenoyl-CoA + malonyl-CoA + H(+) = (7Z,10Z,13Z,16Z)-3-oxodocosatetraenoyl-CoA + CO2 + CoA. It catalyses the reaction (6Z,9Z,12Z)-octadecatrienoyl-CoA + malonyl-CoA + H(+) = (8Z,11Z,14Z)-3-oxoeicosatrienoyl-CoA + CO2 + CoA. It carries out the reaction (9Z,12Z)-octadecadienoyl-CoA + malonyl-CoA + H(+) = (11Z,14Z)-3-oxoicosa-11,14-dienoyl-CoA + CO2 + CoA. The catalysed reaction is (9Z)-octadecenoyl-CoA + malonyl-CoA + H(+) = 3-oxo-(11Z)-eicosenoyl-CoA + CO2 + CoA. The enzyme catalyses octadecanoyl-CoA + malonyl-CoA + H(+) = 3-oxoeicosanoyl-CoA + CO2 + CoA. It catalyses the reaction hexadecanoyl-CoA + malonyl-CoA + H(+) = 3-oxooctadecanoyl-CoA + CO2 + CoA. It carries out the reaction (9Z,12Z,15Z)-octadecatrienoyl-CoA + malonyl-CoA + H(+) = (11Z,14Z,17Z)-3-oxoeicosatrienoyl-CoA + CO2 + CoA. It participates in lipid metabolism; fatty acid biosynthesis. Functionally, catalyzes the first and rate-limiting reaction of the four reactions that constitute the long-chain fatty acids elongation cycle. This endoplasmic reticulum-bound enzymatic process allows the addition of 2 carbons to the chain of long- and very long-chain fatty acids (VLCFAs) per cycle. Condensing enzyme with higher activity toward C18 acyl-CoAs, especially C18:3(n-3) acyl-CoAs and C18:3(n-6)-CoAs. Also active toward C20:4-, C18:0-, C18:1-, C18:2- and C16:0-CoAs, and weakly toward C20:0-CoA. Little or no activity toward C22:0-, C24:0-, or C26:0-CoAs. May participate in the production of saturated and polyunsaturated VLCFAs of different chain lengths that are involved in multiple biological processes as precursors of membrane lipids and lipid mediators. The sequence is that of Very long chain fatty acid elongase 7 from Homo sapiens (Human).